The sequence spans 559 residues: Neutral amino acid transporter 9 (559 aa).

At 1–118 (MANVDSDSRH…YTEGYRKNTS (118 aa)) the chain is on the cytoplasmic side. The helical transmembrane segment at 119–139 (LVTIFMIWNTMMGTSILSIPW) threads the bilayer. Positions 128 to 133 (TMMGTS) are important for arginine binding and amino acid transport. Ser133 contacts arginine. Over 140 to 145 (GIKQAG) the chain is Lumenal. Residues 146–166 (FTTGMCVIVLMGLLTLYCCYR) traverse the membrane as a helical segment. The Cytoplasmic portion of the chain corresponds to 167 to 197 (VVKSRSMIVTSDTTTWEYPDVCKHYFGSFGQ). A helical membrane pass occupies residues 198 to 224 (WSSLLFSLVSLIGAMIVYWVLMSNFLF). Topologically, residues 225-281 (NTGKFIFNFIHHINDTDTVLSTNNSSPVICPSAGSGHPDNSSMIFYNSDTEVRLFER) are lumenal. N-linked (GlcNAc...) asparagine glycosylation is found at Asn238, Asn247, and Asn264. Cysteines 254 and 422 form a disulfide. Residues 282–298 (WWDKSKTVPFYLIGLLL) form a helical membrane-spanning segment. Residues 299 to 307 (PLLNFKSPS) are Cytoplasmic-facing. The helical transmembrane segment at 308–332 (FFSKFNILGTVSVLYLIFIVTLKAI) threads the bilayer. Over 333–354 (RLGFHLEFHWFAPTEFFVPEIR) the chain is Lumenal. Residues 355-375 (AQFPQLTGVLTLAFFIHNCII) traverse the membrane as a helical segment. Topologically, residues 376-392 (TLLKNNKNQENNVRDLC) are cytoplasmic. A helical transmembrane segment spans residues 393-413 (IAYMLVTLTYLYIGVLVFASF). Residues 414 to 435 (PSPPLPKDCIEQNFLDNFPSSD) lie on the Lumenal side of the membrane. The chain crosses the membrane as a helical span at residues 436 to 456 (TLSFIARICLLFQMMTVYPLL). Residues 442–452 (RICLLFQMMTV) carry the CARC motif motif. The CRAC motif signature appears at 455-461 (LLGYLAR). Residues 457-477 (GYLARVQLLGHIFGDIYPSIF) are Cytoplasmic-facing. A helical membrane pass occupies residues 478 to 498 (HVLILNLIIVGAGVTMACFYP). Residues 499–505 (NIGGIIR) lie on the Lumenal side of the membrane. The helical transmembrane segment at 506-526 (YSGAACGLAFVFIYPSLIYIL) threads the bilayer. The Cytoplasmic segment spans residues 527 to 538 (SQHQEERLTWPK). The helical transmembrane segment at 539 to 559 (LVFHIIIIILGLANLIAQFFM) threads the bilayer.

It belongs to the amino acid/polyamine transporter 2 family. SLC38A9 subfamily. As to quaternary structure, associated component of the Ragulator complex (composed of LAMTOR1, LAMTOR2, LAMTOR3, LAMTOR4 and LAMTOR5). Associated component of the Rag GTPases heterodimers (composed of RRAGA, RRAGB, RRAGC and RRAGD); this interaction is independent of the Ragulator complex but depends on the nucleotide loading state of the Rag GTPase heterodimer. Interacts with TM4SF5. Interacts with NPC1; this interaction inhibits cholesterol-mediated mTORC1 activation via its sterol transport activity. Post-translationally, glycosylated.

The protein resides in the lysosome membrane. Its subcellular location is the late endosome membrane. The catalysed reaction is L-leucine(in) = L-leucine(out). It catalyses the reaction L-tyrosine(in) = L-tyrosine(out). It carries out the reaction L-glutamine(out) = L-glutamine(in). The enzyme catalyses L-asparagine(out) = L-asparagine(in). Its function is as follows. Lysosomal amino acid transporter involved in the activation of mTORC1 in response to amino acid levels. Probably acts as an amino acid sensor of the Rag GTPases and Ragulator complexes, 2 complexes involved in amino acid sensing and activation of mTORC1, a signaling complex promoting cell growth in response to growth factors, energy levels, and amino acids. Following activation by amino acids, the Ragulator and Rag GTPases function as a scaffold recruiting mTORC1 to lysosomes where it is in turn activated. SLC38A9 mediates transport of amino acids with low capacity and specificity with a slight preference for polar amino acids. Acts as an arginine sensor. Following activation by arginine binding, mediates transport of L-glutamine, leucine and tyrosine with high efficiency, and is required for the efficient utilization of these amino acids after lysosomal protein degradation. However, the transport mechanism is not well defined and the role of sodium is not clear. Can disassemble the lysosomal folliculin complex (LFC), and thereby triggers GAP activity of FLCN:FNIP2 toward RRAGC. Acts as an cholesterol sensor that conveys increases in lysosomal cholesterol, leading to lysosomal recruitment and activation of mTORC1 via the Rag GTPases. Guanine exchange factor (GEF) that, upon arginine binding, stimulates GDP release from RRAGA and therefore activates the Rag GTPase heterodimer and the mTORC1 pathway in response to nutrient sufficiency. In Rattus norvegicus (Rat), this protein is Neutral amino acid transporter 9.